A 200-amino-acid polypeptide reads, in one-letter code: Superoxide dismutase [Fe] (200 aa).

4 residues coordinate Fe cation: H28, H80, D162, and H166.

The protein belongs to the iron/manganese superoxide dismutase family. In terms of assembly, homodimer. Fe cation is required as a cofactor.

It carries out the reaction 2 superoxide + 2 H(+) = H2O2 + O2. Destroys superoxide anion radicals which are normally produced within the cells and which are toxic to biological systems. This chain is Superoxide dismutase [Fe] (sodB), found in Nostoc sp. (strain PCC 7120 / SAG 25.82 / UTEX 2576).